The following is a 719-amino-acid chain: Eukaryotic translation initiation factor 3 subunit B (719 aa).

Residues 60-147 (NILVVDNLPV…HIFAVNMFDD (88 aa)) form the RRM domain. 3 WD repeats span residues 167–207 (VPGE…KPEL), 511–553 (LKGK…TMAS), and 555–598 (EHFM…LYRI). Residues 675–686 (EKMERQKLRDGE) show a composition bias toward basic and acidic residues. The disordered stretch occupies residues 675-698 (EKMERQKLRDGEASDEEEEYEAKE). The segment covering 687–698 (ASDEEEEYEAKE) has biased composition (acidic residues).

The protein belongs to the eIF-3 subunit B family. As to quaternary structure, component of the eukaryotic translation initiation factor 3 (eIF-3) complex.

Its subcellular location is the cytoplasm. Functionally, RNA-binding component of the eukaryotic translation initiation factor 3 (eIF-3) complex, which is involved in protein synthesis of a specialized repertoire of mRNAs and, together with other initiation factors, stimulates binding of mRNA and methionyl-tRNAi to the 40S ribosome. The eIF-3 complex specifically targets and initiates translation of a subset of mRNAs involved in cell proliferation. This Nicotiana tabacum (Common tobacco) protein is Eukaryotic translation initiation factor 3 subunit B (TIF3B1).